The sequence spans 168 residues: Photosystem I assembly protein Ycf3 (168 aa).

TPR repeat units lie at residues Ala35–Pro68, Ser72–Leu105, and Gly120–Asn153.

The protein belongs to the Ycf3 family.

It localises to the plastid. It is found in the chloroplast thylakoid membrane. Its function is as follows. Essential for the assembly of the photosystem I (PSI) complex. May act as a chaperone-like factor to guide the assembly of the PSI subunits. This Solanum tuberosum (Potato) protein is Photosystem I assembly protein Ycf3.